A 956-amino-acid polypeptide reads, in one-letter code: Plasma membrane ATPase 1 (956 aa).

The Cytoplasmic segment spans residues 1–65; it reads MAEKPEVLDA…EKKESKFLKF (65 aa). A helical membrane pass occupies residues 66 to 85; that stretch reads LGFMWNPLSWVMEAAAIMAI. At 86–97 the chain is on the extracellular side; sequence ALANGGGKPPDW. The chain crosses the membrane as a helical span at residues 98–118; it reads QDFVGIITLLIINSTISFIEE. At 119-247 the chain is on the cytoplasmic side; sequence NNAGNAAAAL…GHFQKVLTAI (129 aa). The chain crosses the membrane as a helical span at residues 248–268; the sequence is GNFCICSIAVGMIIEIIVMYP. Over 269–277 the chain is Extracellular; it reads IQHRKYRPG. Residues 278–295 traverse the membrane as a helical segment; sequence IDNLLVLLIGGIPIAMPT. At 296-646 the chain is on the cytoplasmic side; sequence VLSVTMAIGS…LTSRAIFQRM (351 aa). Asp-333 (4-aspartylphosphate intermediate) is an active-site residue. Mg(2+) contacts are provided by Asp-592 and Asp-596. Residues 647 to 666 traverse the membrane as a helical segment; it reads KNYTIYAVSITIRIVLGFML. The Extracellular portion of the chain corresponds to 667-674; it reads LALIWKFD. The helical transmembrane segment at 675-697 threads the bilayer; that stretch reads FPPFMVLIIAILNDGTIMTISKD. The Cytoplasmic portion of the chain corresponds to 698–713; it reads RVKPSPLPDSWKLAEI. A helical membrane pass occupies residues 714–734; that stretch reads FTTGVVLGGYLAMMTVIFFWA. Over 735–759 the chain is Extracellular; it reads AYKTNFFPRIFGVSTLEKTATDDFR. Residues 760–780 form a helical membrane-spanning segment; that stretch reads KLASAIYLQVSTISQALIFVT. The Cytoplasmic portion of the chain corresponds to 781–792; the sequence is RSRSWSFVERPG. Residues 793–813 traverse the membrane as a helical segment; sequence LLLVFAFFVAQLVATLIAVYA. Topologically, residues 814 to 821 are extracellular; that stretch reads NWSFAAIE. A helical transmembrane segment spans residues 822-842; that stretch reads GIGWGWAGVIWLYNIVTYIPL. Residues 843–956 are Cytoplasmic-facing; it reads DLIKFLIRYA…IETIQQSYTV (114 aa).

The protein belongs to the cation transport ATPase (P-type) (TC 3.A.3) family. Type IIIA subfamily. As to quaternary structure, possibly exists as a homodimer or a homotrimer.

Its subcellular location is the cell membrane. It catalyses the reaction ATP + H2O + H(+)(in) = ADP + phosphate + 2 H(+)(out). Functionally, the plasma membrane ATPase of plants and fungi is a hydrogen ion pump. The proton gradient it generates drives the active transport of nutrients by H(+)-symport. The resulting external acidification and/or internal alkinization may mediate growth responses. In Solanum lycopersicum (Tomato), this protein is Plasma membrane ATPase 1 (LHA1).